The chain runs to 294 residues: dTDP-4-dehydrorhamnose reductase (294 aa).

Residues 11–13 (GQL), 38–39 (DI), and 62–64 (AYT) each bind NADH. Residues 12 to 13 (QL), 38 to 39 (DI), and 62 to 64 (AYT) each bind NADPH. 103 to 104 (TD) contacts dTDP-beta-L-rhamnose. NADH contacts are provided by tyrosine 127 and lysine 131. NADPH-binding residues include tyrosine 127 and lysine 131. Residue tyrosine 127 is the Proton donor/acceptor of the active site. A dTDP-beta-L-rhamnose-binding site is contributed by tryptophan 152.

The protein belongs to the dTDP-4-dehydrorhamnose reductase family. In terms of assembly, homodimer. It depends on Mg(2+) as a cofactor.

It carries out the reaction dTDP-beta-L-rhamnose + NADP(+) = dTDP-4-dehydro-beta-L-rhamnose + NADPH + H(+). It participates in carbohydrate biosynthesis; dTDP-L-rhamnose biosynthesis. The protein operates within bacterial outer membrane biogenesis; LPS O-antigen biosynthesis. Involved in the biosynthesis of the dTDP-L-rhamnose which is an important component of lipopolysaccharide (LPS). Catalyzes the reduction of dTDP-6-deoxy-L-lyxo-4-hexulose to yield dTDP-L-rhamnose. The protein is dTDP-4-dehydrorhamnose reductase of Aggregatibacter actinomycetemcomitans (Actinobacillus actinomycetemcomitans).